Reading from the N-terminus, the 260-residue chain is Potassium inward rectifier (Kir)-like channel 3 (260 aa).

Residues 1–34 form a disordered region; that stretch reads MPMTPSEFKNRLLFGSLPRSSSDPTDLQFTEPNV. Over 1-68 the chain is Cytoplasmic; the sequence is MPMTPSEFKN…EQSVSKSIAR (68 aa). Residues 18–31 are compositionally biased toward polar residues; sequence PRSSSDPTDLQFTE. Residues 69-89 traverse the membrane as a helical segment; sequence QALALLVVYLSLGVLIYWLTL. The pore-forming intramembrane region spans 127–146; it reads DSFCFSVMMVTTVGFGDRAF. Residues 153–173 traverse the membrane as a helical segment; sequence FLAAVWLLVSTLAVARAFLFL. Over 174–260 the chain is Cytoplasmic; sequence ADARADKRNR…LVDLTTATSV (87 aa). EF-hand domains are found at residues 190-225 and 229-256; these read LGES…QMEK and EDFI…DLTT. Ca(2+) is bound by residues Asp203, Asp205, Asp207, Arg209, Glu214, Asp242, Ser246, Arg248, and Asp253.

It belongs to the two pore domain potassium channel (TC 1.A.1.7) family. Homotetramer. As to expression, expressed in hydathodes and the vascular tissues of roots, stems, leaves and flowers.

Its subcellular location is the vacuole membrane. Functionally, probable calcium-activated potassium channel. This chain is Potassium inward rectifier (Kir)-like channel 3 (KCO3), found in Arabidopsis thaliana (Mouse-ear cress).